The following is a 333-amino-acid chain: Protoheme IX farnesyltransferase (333 aa).

Residues methionine 1–proline 13 are compositionally biased toward low complexity. Residues methionine 1–serine 21 form a disordered region. The next 8 membrane-spanning stretches (helical) occupy residues leucine 38 to leucine 58, leucine 63 to leucine 83, alanine 109 to valine 129, leucine 132 to leucine 152, isoleucine 160 to glycine 180, tryptophan 188 to leucine 208, cysteine 245 to phenylalanine 265, and alanine 286 to valine 306.

It belongs to the UbiA prenyltransferase family. Protoheme IX farnesyltransferase subfamily.

The protein localises to the cell inner membrane. The enzyme catalyses heme b + (2E,6E)-farnesyl diphosphate + H2O = Fe(II)-heme o + diphosphate. It functions in the pathway porphyrin-containing compound metabolism; heme O biosynthesis; heme O from protoheme: step 1/1. In terms of biological role, converts heme B (protoheme IX) to heme O by substitution of the vinyl group on carbon 2 of heme B porphyrin ring with a hydroxyethyl farnesyl side group. This chain is Protoheme IX farnesyltransferase, found in Prochlorococcus marinus (strain SARG / CCMP1375 / SS120).